Here is a 177-residue protein sequence, read N- to C-terminus: 3-isopropylmalate dehydratase small subunit 1 (177 aa).

Residues 157–177 (GRFPGEEPGAEASTETASAAE) form a disordered region. Low complexity predominate over residues 162 to 177 (EEPGAEASTETASAAE).

This sequence belongs to the LeuD family. LeuD type 2 subfamily. In terms of assembly, heterodimer of LeuC and LeuD.

The enzyme catalyses (2R,3S)-3-isopropylmalate = (2S)-2-isopropylmalate. The protein operates within amino-acid biosynthesis; L-leucine biosynthesis; L-leucine from 3-methyl-2-oxobutanoate: step 2/4. In terms of biological role, catalyzes the isomerization between 2-isopropylmalate and 3-isopropylmalate, via the formation of 2-isopropylmaleate. The sequence is that of 3-isopropylmalate dehydratase small subunit 1 (leuD1) from Deinococcus radiodurans (strain ATCC 13939 / DSM 20539 / JCM 16871 / CCUG 27074 / LMG 4051 / NBRC 15346 / NCIMB 9279 / VKM B-1422 / R1).